The sequence spans 89 residues: MMNLSRAVVRSFATTAGRRSAAVPKDQIEKGYFEIRKVQEHFQKKDGKPVFLKGSVVDNVLYRVTVALALVGIGGMGKLFYELSVPKKE.

A mitochondrion-targeting transit peptide spans 1-31 (MMNLSRAVVRSFATTAGRRSAAVPKDQIEKG). Residues 32 to 58 (YFEIRKVQEHFQKKDGKPVFLKGSVVD) lie on the Mitochondrial matrix side of the membrane. A helical transmembrane segment spans residues 59–81 (NVLYRVTVALALVGIGGMGKLFY). At 82–89 (ELSVPKKE) the chain is on the mitochondrial intermembrane side.

This sequence belongs to the cytochrome c oxidase VIIa family. Component of the cytochrome c oxidase (complex IV, CIV), a multisubunit enzyme composed of a catalytic core of 3 subunits and several supernumerary subunits. The complex exists as a monomer or a dimer and forms supercomplexes (SCs) in the inner mitochondrial membrane with ubiquinol-cytochrome c oxidoreductase (cytochrome b-c1 complex, complex III, CIII).

It is found in the mitochondrion inner membrane. The protein operates within energy metabolism; oxidative phosphorylation. Functionally, component of the cytochrome c oxidase, the last enzyme in the mitochondrial electron transport chain which drives oxidative phosphorylation. The respiratory chain contains 3 multisubunit complexes succinate dehydrogenase (complex II, CII), ubiquinol-cytochrome c oxidoreductase (cytochrome b-c1 complex, complex III, CIII) and cytochrome c oxidase (complex IV, CIV), that cooperate to transfer electrons derived from NADH and succinate to molecular oxygen, creating an electrochemical gradient over the inner membrane that drives transmembrane transport and the ATP synthase. Cytochrome c oxidase is the component of the respiratory chain that catalyzes the reduction of oxygen to water. Electrons originating from reduced cytochrome c in the intermembrane space (IMS) are transferred via the dinuclear copper A center (CU(A)) of subunit 2 and heme A of subunit 1 to the active site in subunit 1, a binuclear center (BNC) formed by heme A3 and copper B (CU(B)). The BNC reduces molecular oxygen to 2 water molecules using 4 electrons from cytochrome c in the IMS and 4 protons from the mitochondrial matrix. In Drosophila melanogaster (Fruit fly), this protein is Cytochrome c oxidase subunit 7A, mitochondrial.